We begin with the raw amino-acid sequence, 90 residues long: FMRFamide-like neuropeptides 27 (90 aa).

The N-terminal stretch at 1 to 24 (MFSFRKFLAFMLIVIALMASFSSA) is a signal peptide. Residues 25 to 36 (QPIDEERPIFME) constitute a propeptide that is removed on maturation. F61 is subject to Phenylalanine amide. A propeptide spanning residues 65–90 (SSSPSDISMAELRAIYGGGPVEYVQL) is cleaved from the precursor.

This sequence belongs to the FARP (FMRFamide related peptide) family.

It is found in the secreted. Functionally, FMRFamides and FMRFamide-like peptides are neuropeptides. The polypeptide is FMRFamide-like neuropeptides 27 (Caenorhabditis briggsae).